The primary structure comprises 181 residues: Organ-specific protein S2 (181 aa).

A run of 4 repeats spans residues 59-84 (HAKE…DNEI), 85-110 (HAKE…DNEI), 111-136 (HANE…DNEI), and 137-162 (HANE…DNEI). Positions 59–162 (HAKENMGAIG…NASAYGDNEI (104 aa)) are 4 X 26 AA tandem repeats. The tract at residues 94 to 181 (GEFEPRPNAS…PRPSMTKYNA (88 aa)) is disordered.

To organ specific protein P4. As to expression, expressed in stems.

The polypeptide is Organ-specific protein S2 (Pisum sativum (Garden pea)).